Reading from the N-terminus, the 616-residue chain is Endonuclease 8-like 3 (616 aa).

The FPG-type zinc finger occupies 271–305; that stretch reads KVYKRPNCGQCGTKITVCRLGEHNRMTYFCPKCQK. The segment at 341–370 adopts a RanBP2-type zinc-finger fold; the sequence is KEEHWACAVCTLINKPSDKQCDACLTLRPE. A disordered region spans residues 491 to 524; sequence LKTGHTTSNTIHLSSTISSPQSKMTGDAAAKTGN. The span at 494 to 514 shows a compositional bias: polar residues; it reads GHTTSNTIHLSSTISSPQSKM. Zn(2+) is bound by residues Cys527, His530, Cys553, Cys561, Cys574, His576, Cys599, and Cys607. 2 consecutive GRF-type zinc fingers follow at residues 527-570 and 574-616; these read CSAH…ADLH and CNHG…AKTE.

The protein belongs to the FPG family.

The protein resides in the nucleus. The protein localises to the chromosome. The catalysed reaction is 2'-deoxyribonucleotide-(2'-deoxyribose 5'-phosphate)-2'-deoxyribonucleotide-DNA = a 3'-end 2'-deoxyribonucleotide-(2,3-dehydro-2,3-deoxyribose 5'-phosphate)-DNA + a 5'-end 5'-phospho-2'-deoxyribonucleoside-DNA + H(+). In terms of biological role, DNA glycosylase which prefers single-stranded DNA (ssDNA), or partially ssDNA structures such as bubble and fork structures, to double-stranded DNA (dsDNA). Mediates interstrand cross-link repair in response to replication stress: recruited to replication stress sites via interaction with ubiquitinated CMG helicase and acts by mediating DNA glycosylase activity. Cleaves one of the two N-glycosyl bonds comprising the interstrand cross-link, which avoids the formation of a double-strand break but generates an abasic site that is bypassed by translesion synthesis polymerases. The chain is Endonuclease 8-like 3 from Xenopus laevis (African clawed frog).